A 456-amino-acid chain; its full sequence is MSFRKRGEILNDRGSGLRGPLLRGPPRTSSTPLRTGNRRAPGNVPLSDTTARLKKLNIADESKTKMGLDSSHVGVRPSPATSQPTTSTGSADLDSILGHMGLPLGNSVLVEEQSTTEFHSILGKLFAAQGIVHNRISDSSADKTRNGDTHVIVLSLNQMFAKELPGIYKGSRKQMKKNLISEEESKVTVQNLNETQRSTPSRYKDLKIAWKYKLADEKRLGSPDRDDIQQNSEYKDYNHQFDITTRLMPAPIASELTFIAPTQPVSTILSQIEQTIKRNDKKLIRIVIPSLLHPAMYPPKMFESSEIIGLMHGVRSLVKKYYERVVLFASISIDIITPPLLVLLRNMFDSVINLEPFNQEMTEFLERVYKSQPGKIQHGLVHILKLPVFTDRGEMRVLKSEWAFKNGRKKFEIEQWGIPVDDAEGSAASEQSHSHSHSDEISHNIPAKKTKISLDY.

A compositionally biased stretch (basic and acidic residues) spans Met-1–Asn-11. Positions Met-1–Ala-91 are disordered. Arg-13 is modified (omega-N-methylarginine). The segment covering Arg-18 to Arg-27 has biased composition (low complexity). Basic and acidic residues predominate over residues Asn-57–Met-66. Over residues Pro-77–Ser-90 the composition is skewed to low complexity. Ser-222 carries the phosphoserine modification. Residues Glu-424–Asn-444 form a disordered region. The span at Ser-432–Ser-442 shows a compositional bias: basic and acidic residues.

The protein belongs to the ELP4 family. As to quaternary structure, component of the elongator complex which consists of ELP1/IKI3, ELP2, ELP3, ELP4, ELP5/IKI1 and ELP6. The elongator complex is composed of two copies of the Elp123 subcomplex (composed of ELP1/IKI3, ELP2 and ELP3) and two copies of the Elp456 subcomplex (composed of ELP4, ELP5/IKI1 and ELP6). The Elp123 subcomplex forms a two-lobed scaffold, which binds the Elp456 subcomplex asymmetrically. In each lobe, ELP2 is tightly sandwiched between ELP1/IKI3 and ELP3. The Elp123 subcomplex binds tRNA through ELP1/IKI3 and ELP3 and can bind 2 tRNAs simultaneously. tRNA-binding by the Elp123 subcomplex induces conformational rearrangements which precisely position the targeted anticodon base in the active site. The Elp456 subcomplex binds tRNA and has ATPase activity. ELP4 interacts with KTI12.

Its subcellular location is the cytoplasm. It localises to the nucleus. It functions in the pathway tRNA modification; 5-methoxycarbonylmethyl-2-thiouridine-tRNA biosynthesis. Its function is as follows. Component of the elongator complex, a multiprotein complex which is required for multiple tRNA modifications, including mcm5U (5-methoxycarbonylmethyl uridine), mcm5s2U (5-methoxycarbonylmethyl-2-thiouridine), and ncm5U (5-carbamoylmethyl uridine). The elongator complex catalyzes formation of carboxymethyluridine in the wobble base at position 34 in tRNAs. It functions as a gamma-toxin target (TOT); disruption of the complex confers resistance to Kluyveromyces lactis toxin zymocin (pGKL1 killer toxin). May also be involved in sensitivity to Pichia inositovora toxin. The chain is Elongator complex protein 4 from Saccharomyces cerevisiae (strain ATCC 204508 / S288c) (Baker's yeast).